Reading from the N-terminus, the 92-residue chain is Large ribosomal subunit protein eL43 (92 aa).

The segment at 39 to 60 (CEFCGKFAVKRKAVGIWGCKDC) adopts a C4-type zinc-finger fold.

Belongs to the eukaryotic ribosomal protein eL43 family.

This Pseudotsuga menziesii (Douglas-fir) protein is Large ribosomal subunit protein eL43 (RPL37A).